A 384-amino-acid polypeptide reads, in one-letter code: Glucans biosynthesis protein C (384 aa).

A run of 10 helical transmembrane segments spans residues 17–37 (AWLMLLGIPFHISLIYSTHSW), 54–74 (FIHAFRMQVFFVISGYFSYML), 91–111 (VGIPMLTAIPLLTLPQFILLQ), 140–160 (LWFLLVLVILTTVSIGIFTWF), 173–193 (AISLAKLSLIFFLLGVAYAAI), 212–232 (FIVMQTLFYVPFFILGALAFI), 240–260 (FTTPSRGCTLGAAVAFIAYLL), 274–294 (TESVITMVMGLWMVNVVFSLG), 311–331 (ASLFIYLVHHPLTLFFGAYIT), and 338–358 (LIGFLCGLIFVMGIALILYEI).

The protein belongs to the acyltransferase 3 family. OpgC subfamily.

It localises to the cell membrane. It participates in glycan metabolism; osmoregulated periplasmic glucan (OPG) biosynthesis. Necessary for the succinyl substitution of periplasmic glucans. Could catalyze the transfer of succinyl residues from the cytoplasmic side of the membrane to the nascent glucan backbones on the periplasmic side of the membrane. In Salmonella typhimurium (strain LT2 / SGSC1412 / ATCC 700720), this protein is Glucans biosynthesis protein C.